The primary structure comprises 795 residues: RAS guanyl-releasing protein 1 (795 aa).

The span at 1-12 shows a compositional bias: basic and acidic residues; sequence MGTLGKAREAPR. The tract at residues 1-37 is disordered; sequence MGTLGKAREAPRKPCHGSRAGPKARLEAKSTNSPLPA. The region spanning 53–176 is the N-terminal Ras-GEF domain; sequence LGHLAKGASL…HLIDTTQINS (124 aa). The segment at 57-110 is ras exchanger motif region; required for transforming activity; the sequence is AKGASLDDLIDSCIQSFDADGNLCRNNQLLQVMLTMHRIIISSAELLQKVMNLY. Thr-184 carries the phosphothreonine; by PKC modification. The Ras-GEF domain maps to 205-436; the sequence is EPEELSEHLT…YELSYAREPR (232 aa). 2 EF-hand domains span residues 470–505 and 506–532; these read HVQR…FPFS and FCVM…ASSI. Ca(2+) is bound by residues Asp-483, Asp-485, Asp-487, Tyr-489, and Glu-494. A Phorbol-ester/DAG-type zinc finger spans residues 541-591; that stretch reads PHNFQETTYLKPTFCDNCAGFLWGVIKQGYRCKDCGMNCHKQCKDLVVFEC. At Ser-597 the chain carries Phosphoserine. The suppress the PT region-mediated translocation to plasma membrane stretch occupies residues 686–694; the sequence is TPGHFVLSS. The interval 717 to 795 is PT region; mediates the BCR-dependent translocation to plasma membrane; the sequence is LVRKRAFVKW…LAQMDHGDSA (79 aa). The stretch at 738–779 forms a coiled coil; it reads ELHLRLRTYQELEQEINTLKADNDALKIQLKYAQKKIESLQL.

The protein belongs to the RASGRP family. Homodimer. Forms a signaling complex with DGKZ and HRAS. Interacts with F-actin. Interacts with SKAP1. As to expression, detected in spleen and thymus. Expressed by mature thymocytes and to a lower extent by bone marrow-derived mast cells (at protein level). Detected in B-cells and keratinocytes (at protein level).

The protein localises to the cytoplasm. It is found in the cytosol. It localises to the cell membrane. Its subcellular location is the golgi apparatus membrane. The protein resides in the endoplasmic reticulum membrane. With respect to regulation, autoinhibited. Activated by diacylglycerol and calcium binding, which induces a conformational change releasing the autoinhibitory state. Regulated by DGKA. Regulated by DGKZ. Regulated by PLC gamma and F-actin polymerization. Functionally, functions as a calcium- and diacylglycerol (DAG)-regulated nucleotide exchange factor specifically activating Ras through the exchange of bound GDP for GTP. Activates the Erk/MAP kinase cascade. Regulates T-cell/B-cell development, homeostasis and differentiation by coupling T-lymphocyte/B-lymphocyte antigen receptors to Ras. Regulates NK cell cytotoxicity and ITAM-dependent cytokine production by activation of Ras-mediated ERK and JNK pathways. Functions in mast cell degranulation and cytokine secretion, regulating FcERI-evoked allergic responses. May also function in differentiation of other cell types. Proto-oncogene, which promotes T-cell lymphomagenesis when its expression is deregulated. The protein is RAS guanyl-releasing protein 1 (Rasgrp1) of Mus musculus (Mouse).